The following is a 439-amino-acid chain: UDP-N-acetylmuramoylalanine--D-glutamate ligase (439 aa).

Residue 112–118 (GSNGKST) coordinates ATP.

It belongs to the MurCDEF family.

Its subcellular location is the cytoplasm. It carries out the reaction UDP-N-acetyl-alpha-D-muramoyl-L-alanine + D-glutamate + ATP = UDP-N-acetyl-alpha-D-muramoyl-L-alanyl-D-glutamate + ADP + phosphate + H(+). Its pathway is cell wall biogenesis; peptidoglycan biosynthesis. Its function is as follows. Cell wall formation. Catalyzes the addition of glutamate to the nucleotide precursor UDP-N-acetylmuramoyl-L-alanine (UMA). In Mannheimia succiniciproducens (strain KCTC 0769BP / MBEL55E), this protein is UDP-N-acetylmuramoylalanine--D-glutamate ligase.